The sequence spans 152 residues: ESAT-6 secretion machinery protein EssA (152 aa).

The Cytoplasmic segment spans residues 1 to 114; the sequence is MLMNSVIALT…PYIQNKQEKK (114 aa). Residues 115–135 traverse the membrane as a helical segment; it reads IFPYILMSVGAFLTLGFVIFS. The Extracellular portion of the chain corresponds to 136–152; it reads IHKGRRTKNESARKSNI.

The protein belongs to the EssA family.

The protein resides in the cell membrane. Functionally, component of the ESAT-6 secretion system (Ess). Required for the secretion of EsxA. In Staphylococcus aureus (strain MRSA252), this protein is ESAT-6 secretion machinery protein EssA.